Consider the following 259-residue polypeptide: tRNA pseudouridine synthase A (259 aa).

Residue aspartate 51 is the Nucleophile of the active site. Residue tyrosine 109 coordinates substrate.

Belongs to the tRNA pseudouridine synthase TruA family. In terms of assembly, homodimer.

It catalyses the reaction uridine(38/39/40) in tRNA = pseudouridine(38/39/40) in tRNA. Functionally, formation of pseudouridine at positions 38, 39 and 40 in the anticodon stem and loop of transfer RNAs. The protein is tRNA pseudouridine synthase A of Colwellia psychrerythraea (strain 34H / ATCC BAA-681) (Vibrio psychroerythus).